The primary structure comprises 459 residues: UDP-N-acetylglucosamine 1-carboxyvinyltransferase (459 aa).

Lys-40 to Asn-41 serves as a coordination point for phosphoenolpyruvate. Arg-111 is a UDP-N-acetyl-alpha-D-glucosamine binding site. Cys-135 serves as the catalytic Proton donor. At Cys-135 the chain carries 2-(S-cysteinyl)pyruvic acid O-phosphothioketal. UDP-N-acetyl-alpha-D-glucosamine contacts are provided by residues Arg-140 to Leu-144, Asp-324, and Val-346. The interval Pro-437 to Val-459 is disordered. The span at Pro-441–Val-459 shows a compositional bias: low complexity.

The protein belongs to the EPSP synthase family. MurA subfamily.

It localises to the cytoplasm. It catalyses the reaction phosphoenolpyruvate + UDP-N-acetyl-alpha-D-glucosamine = UDP-N-acetyl-3-O-(1-carboxyvinyl)-alpha-D-glucosamine + phosphate. Its pathway is cell wall biogenesis; peptidoglycan biosynthesis. Its function is as follows. Cell wall formation. Adds enolpyruvyl to UDP-N-acetylglucosamine. This is UDP-N-acetylglucosamine 1-carboxyvinyltransferase from Gloeobacter violaceus (strain ATCC 29082 / PCC 7421).